The primary structure comprises 176 residues: Sperm-egg fusion protein TMEM95 (176 aa).

An N-terminal signal peptide occupies residues 1 to 16; that stretch reads MWVLALGGAFLAVAKA. 4 cysteine pairs are disulfide-bonded: C17-C119, C20-C122, C106-C129, and C110-C135. Over 17–146 the chain is Extracellular; sequence CIFCRLQDHA…PDSHDLWDAR (130 aa). N-linked (GlcNAc...) asparagine glycans are attached at residues N36 and N118. The chain crosses the membrane as a helical span at residues 147-167; that stretch reads ILLLCIFGIVLLSGVVSLQVE. At 168-176 the chain is on the cytoplasmic side; sequence YLNLQAKDL.

The protein belongs to the TMEM95 family. Does not interact with sperm-egg fusion proteins IZUMO1 or IZUMO1R/JUNO. N-glycosylated. As to expression, expressed exclusively in testis.

It is found in the cytoplasmic vesicle. The protein resides in the secretory vesicle. It localises to the acrosome membrane. Its function is as follows. Sperm protein required for fusion of sperm with the egg membrane during fertilization. This chain is Sperm-egg fusion protein TMEM95, found in Mus musculus (Mouse).